The primary structure comprises 326 residues: Malate dehydrogenase (326 aa).

12–18 (GGTGQIA) provides a ligand contact to NAD(+). Substrate is bound by residues Arg93 and Arg99. Residues Asn106, Gln113, and 130-132 (VGN) contribute to the NAD(+) site. Residues Asn132 and Arg163 each coordinate substrate. His188 (proton acceptor) is an active-site residue.

This sequence belongs to the LDH/MDH superfamily. MDH type 2 family.

It catalyses the reaction (S)-malate + NAD(+) = oxaloacetate + NADH + H(+). In terms of biological role, catalyzes the reversible oxidation of malate to oxaloacetate. This is Malate dehydrogenase from Chlamydia trachomatis serovar L2 (strain ATCC VR-902B / DSM 19102 / 434/Bu).